Here is a 123-residue protein sequence, read N- to C-terminus: Small ribosomal subunit protein uS12 (123 aa).

A 3-methylthioaspartic acid modification is found at aspartate 89. A disordered region spans residues 100 to 123 (GSLDTSGVKGRNQGRSKYGTKRPK). Residues 111 to 123 (NQGRSKYGTKRPK) are compositionally biased toward basic residues.

The protein belongs to the universal ribosomal protein uS12 family. Part of the 30S ribosomal subunit. Contacts proteins S8 and S17. May interact with IF1 in the 30S initiation complex.

With S4 and S5 plays an important role in translational accuracy. Functionally, interacts with and stabilizes bases of the 16S rRNA that are involved in tRNA selection in the A site and with the mRNA backbone. Located at the interface of the 30S and 50S subunits, it traverses the body of the 30S subunit contacting proteins on the other side and probably holding the rRNA structure together. The combined cluster of proteins S8, S12 and S17 appears to hold together the shoulder and platform of the 30S subunit. The chain is Small ribosomal subunit protein uS12 from Pseudomonas fluorescens (strain ATCC BAA-477 / NRRL B-23932 / Pf-5).